Consider the following 421-residue polypeptide: Putative NBPF family member NBPF7 (421 aa).

Residues 87–143 (IKSMLREELQFKEEKLAEQLKQAEELRQYKVLVHSQERELIQLREKLREGRDASHSL) adopt a coiled-coil conformation. 3 disordered regions span residues 179-251 (VHKL…KITS), 312-334 (EKEVLQDSPEERVTTSCSDHDVS), and 402-421 (YNSKPSSIPNTTLQGSFTED). Olduvai domains follow at residues 190–279 (EDEN…NILL) and 280–391 (ENQN…RMSQ). The span at 194–217 (DKTKELDKVQESPAPREEQKAEEK) shows a compositional bias: basic and acidic residues. The segment covering 230 to 243 (TYSNSHGPSDSNPP) has biased composition (polar residues). The span at 312–333 (EKEVLQDSPEERVTTSCSDHDV) shows a compositional bias: basic and acidic residues. The segment covering 403-421 (NSKPSSIPNTTLQGSFTED) has biased composition (polar residues).

It belongs to the NBPF family.

It localises to the cytoplasm. The chain is Putative NBPF family member NBPF7 from Homo sapiens (Human).